We begin with the raw amino-acid sequence, 331 residues long: 4-hydroxy-3-methylbut-2-enyl diphosphate reductase (331 aa).

Position 12 (Cys12) interacts with [4Fe-4S] cluster. The (2E)-4-hydroxy-3-methylbut-2-enyl diphosphate site is built by His43 and His81. Residues His43 and His81 each contribute to the dimethylallyl diphosphate site. Residues His43 and His81 each coordinate isopentenyl diphosphate. Cys103 is a [4Fe-4S] cluster binding site. His131 contacts (2E)-4-hydroxy-3-methylbut-2-enyl diphosphate. His131 contributes to the dimethylallyl diphosphate binding site. Isopentenyl diphosphate is bound at residue His131. The Proton donor role is filled by Glu133. Thr170 is a binding site for (2E)-4-hydroxy-3-methylbut-2-enyl diphosphate. Cys198 lines the [4Fe-4S] cluster pocket. (2E)-4-hydroxy-3-methylbut-2-enyl diphosphate is bound by residues Ser226, Asn228, and Ser271. Residues Ser226, Asn228, and Ser271 each coordinate dimethylallyl diphosphate. Isopentenyl diphosphate-binding residues include Ser226, Asn228, and Ser271.

It belongs to the IspH family. [4Fe-4S] cluster serves as cofactor.

The catalysed reaction is isopentenyl diphosphate + 2 oxidized [2Fe-2S]-[ferredoxin] + H2O = (2E)-4-hydroxy-3-methylbut-2-enyl diphosphate + 2 reduced [2Fe-2S]-[ferredoxin] + 2 H(+). The enzyme catalyses dimethylallyl diphosphate + 2 oxidized [2Fe-2S]-[ferredoxin] + H2O = (2E)-4-hydroxy-3-methylbut-2-enyl diphosphate + 2 reduced [2Fe-2S]-[ferredoxin] + 2 H(+). It functions in the pathway isoprenoid biosynthesis; dimethylallyl diphosphate biosynthesis; dimethylallyl diphosphate from (2E)-4-hydroxy-3-methylbutenyl diphosphate: step 1/1. Its pathway is isoprenoid biosynthesis; isopentenyl diphosphate biosynthesis via DXP pathway; isopentenyl diphosphate from 1-deoxy-D-xylulose 5-phosphate: step 6/6. In terms of biological role, catalyzes the conversion of 1-hydroxy-2-methyl-2-(E)-butenyl 4-diphosphate (HMBPP) into a mixture of isopentenyl diphosphate (IPP) and dimethylallyl diphosphate (DMAPP). Acts in the terminal step of the DOXP/MEP pathway for isoprenoid precursor biosynthesis. This is 4-hydroxy-3-methylbut-2-enyl diphosphate reductase from Listeria monocytogenes serotype 4b (strain CLIP80459).